Reading from the N-terminus, the 469-residue chain is MTDRARLRLHDTAAGVVRDFVPLRPGHVSIYLCGATVQGLPHIGHVRSGVAFDILRRWLLARGYDVAFIRNVTDIEDKILAKAAAAGRPWWEWAATHERAFTAAYDALDVLPPSAEPRATGHITQMIEMIERLIQAGHAYTGGGDVYFDVLSYPEYGQLSGHKIDDVHQGEGVAAGKRDQRDFTLWKGEKPGEPSWPTPWGRGRPGWHLECSAMARSYLGPEFDIHCGGMDLVFPHHENEIAQSRAAGDGFARYWLHNGWVTMGGEKMSKSLGNVLSMPAMLQRVRPAELRYYLGSAHYRSMLEFSETAMQDAVKAYVGLEDFLHRVRTRVGAVCPGDPTPRFAEALDDDLSVPIALAEIHHVRAEGNRALDAGDHDGALRSASAIRAMMGILGCDPLDQRWESRDETSAALAAVDVLVQAELQNREKAREQRNWALADEIRGRLKRAGIEVTDTADGPQWSLLGGDTK.

Cysteine 33 provides a ligand contact to Zn(2+). The 'HIGH' region signature appears at 35-45; sequence ATVQGLPHIGH. Cysteine 211, histidine 236, and glutamate 240 together coordinate Zn(2+). The 'KMSKS' region signature appears at 267–271; that stretch reads KMSKS. Lysine 270 contributes to the ATP binding site.

It belongs to the class-I aminoacyl-tRNA synthetase family. In terms of assembly, monomer. Zn(2+) is required as a cofactor.

It is found in the cytoplasm. It catalyses the reaction tRNA(Cys) + L-cysteine + ATP = L-cysteinyl-tRNA(Cys) + AMP + diphosphate. The polypeptide is Cysteine--tRNA ligase (cysS) (Mycobacterium bovis (strain ATCC BAA-935 / AF2122/97)).